The following is a 180-amino-acid chain: Superoxide dismutase [Cu-Zn] (180 aa).

The first 19 residues, 1–19, serve as a signal peptide directing secretion; the sequence is MFMNLLTQVSNAIFPQVEA. H68, H70, and H85 together coordinate Cu cation. C79 and C171 are joined by a disulfide. 4 residues coordinate Zn(2+): H85, H93, H102, and D105. H142 is a binding site for Cu cation.

Belongs to the Cu-Zn superoxide dismutase family. Homodimer. Requires Cu cation as cofactor. Zn(2+) is required as a cofactor.

The protein localises to the cytoplasm. The catalysed reaction is 2 superoxide + 2 H(+) = H2O2 + O2. The insertion of copper which activates the protein requires glutathione. This is independent of copper chaperone for SOD1 (CCS), which activates orthologs. Its function is as follows. Protects cells against oxidative stress by converting superoxide radicals to hydrogen peroxide. Required for normal brood size. May be involved in regulating mpk-1 phosphorylation downstream of phosphatase ptp-2 during oocyte maturation. The sequence is that of Superoxide dismutase [Cu-Zn] (sod-1) from Caenorhabditis elegans.